The chain runs to 690 residues: BURP domain-containing protein 14 (690 aa).

Residues 1–26 (MAPPRHARLVAATIAVLLCHLPRSAA) form the signal peptide. Positions 134 to 163 (GSSWSKSSSDGDGAAAAAAPAGGGGGGGGG) are disordered. Positions 135–153 (SSWSKSSSDGDGAAAAAAP) are enriched in low complexity. Over residues 154–163 (AGGGGGGGGG) the composition is skewed to gly residues. N-linked (GlcNAc...) asparagine glycosylation occurs at Asn-178. Positions 201–211 (SNGGGGGGGGV) are enriched in gly residues. The tract at residues 201–232 (SNGGGGGGGGVDSFRRYGKGSQGRNDSFTSYE) is disordered. N-linked (GlcNAc...) asparagine glycosylation is found at Asn-225, Asn-317, Asn-379, Asn-432, Asn-450, and Asn-601. Residues 477-689 (FFRERDLVAG…FQGDMTWTVA (213 aa)) enclose the BURP domain.

Expressed in panicles.

This chain is BURP domain-containing protein 14 (BURP14), found in Oryza sativa subsp. japonica (Rice).